Consider the following 153-residue polypeptide: D-erythrulose-4-phosphate isomerase 1 (153 aa).

The active-site Proton acceptor is Cys69.

Belongs to the LacAB/RpiB family.

The enzyme catalyses D-erythrulose 4-phosphate = D-erythrose 4-phosphate. The protein operates within carbohydrate metabolism; erythritol degradation. It functions in the pathway carbohydrate metabolism; D-threitol degradation. Functionally, catalyzes the isomerization of D-erythrulose-4P to D-erythrose-4P. Involved in the degradation pathways of erythritol and D-threitol, that allow M.smegmatis to grow on these compounds as the sole carbon source. This chain is D-erythrulose-4-phosphate isomerase 1, found in Mycolicibacterium smegmatis (strain ATCC 700084 / mc(2)155) (Mycobacterium smegmatis).